Reading from the N-terminus, the 594-residue chain is Lipolysis-stimulated lipoprotein receptor (594 aa).

Residues 1 to 35 (MAPAASACAGAPGSHPATTIFVCLFLIIYCPDRAS) form the signal peptide. Residues 36 to 206 (AIQVTVPDPY…PGFRAGPLED (171 aa)) are Extracellular-facing. Positions 89 to 181 (PASVDNQLNA…DLDGNNEAYA (93 aa)) constitute an Ig-like V-type domain. Cysteines 113 and 165 form a disulfide. The helical transmembrane segment at 207–227 (WLFVVVVCLASLLFFLLLGIC) threads the bilayer. Residues 228 to 594 (WCQCCPHTCC…LALSRESLVV (367 aa)) are Cytoplasmic-facing. T283 carries the post-translational modification Phosphothreonine. At S308 the chain carries Phosphoserine; by MAPK8 and MAPK9. 4 positions are modified to phosphoserine: S314, S332, S375, and S379. The span at 375 to 387 (SEVTSLHEDDWRS) shows a compositional bias: basic and acidic residues. Residues 375–594 (SEVTSLHEDD…LALSRESLVV (220 aa)) form a disordered region. T396 bears the Phosphothreonine mark. Residues S407, S410, and S436 each carry the phosphoserine modification. Positions 435 to 444 (RSVDALDDIN) are enriched in basic and acidic residues. A compositionally biased stretch (low complexity) spans 445 to 460 (RPGSTESGRSSPPSSG). A phosphoserine mark is found at S471 and S473. Residues 472-550 (RSRDDLYDPD…GAGERRRVYR (79 aa)) are compositionally biased toward basic and acidic residues. Y478 is subject to Phosphotyrosine. A Phosphoserine modification is found at S576. A Glycyl lysine isopeptide (Lys-Gly) (interchain with G-Cter in ubiquitin) cross-link involves residue K583. Phosphoserine occurs at positions 588 and 591.

It belongs to the immunoglobulin superfamily. LISCH7 family. In terms of assembly, homotrimer or homotetramer. Assembles into cell-cell contacts. Interacts (via the cytoplasmic domain) with MARVELD2 (via C-terminal cytoplasmic domain); the interaction is required to recruit MARVELD2 to tricellular contacts. Interacts with OCLN. Phosphorylation at Ser-308 by MAPK8/JNK1 and MAPK9/JNK2 may be required for exclusive localization at tricellular tight junstions. In terms of processing, polyubiquitinated at Lys-583 via 'Lys-63'-linked ubiquitin chains; deubiquitinated by USP53. Expressed in epithelial tissues (at protein level). Specifically expressed in liver and to a lower extent in kidney (at protein level). Also detected in brain, testis, ovaries, adrenal gland, intestine, muscle, and lung. In colon, only expressed in the lower portion of crypts. Expressed in the liver. As to expression, expressed in liver, stomach, small intestine and colon. Also detected in other epithelial tissues.

The protein resides in the cell membrane. It is found in the cell junction. Its subcellular location is the tight junction. In terms of biological role, probable role in the clearance of triglyceride-rich lipoprotein from blood. Binds chylomicrons, LDL and VLDL in presence of free fatty acids and allows their subsequent uptake in the cells. Maintains epithelial barrier function by recruiting MARVELD2/tricellulin to tricellular tight junctions. This chain is Lipolysis-stimulated lipoprotein receptor, found in Mus musculus (Mouse).